Here is a 124-residue protein sequence, read N- to C-terminus: Small ribosomal subunit protein bS6 (124 aa).

The tract at residues Ile101–Ala124 is disordered. The span at Glu105–Ala115 shows a compositional bias: basic and acidic residues.

This sequence belongs to the bacterial ribosomal protein bS6 family.

Functionally, binds together with bS18 to 16S ribosomal RNA. The polypeptide is Small ribosomal subunit protein bS6 (Polynucleobacter asymbioticus (strain DSM 18221 / CIP 109841 / QLW-P1DMWA-1) (Polynucleobacter necessarius subsp. asymbioticus)).